The following is a 129-amino-acid chain: Large ribosomal subunit protein bL20 (129 aa).

It belongs to the bacterial ribosomal protein bL20 family.

Functionally, binds directly to 23S ribosomal RNA and is necessary for the in vitro assembly process of the 50S ribosomal subunit. It is not involved in the protein synthesizing functions of that subunit. In Kineococcus radiotolerans (strain ATCC BAA-149 / DSM 14245 / SRS30216), this protein is Large ribosomal subunit protein bL20.